A 647-amino-acid polypeptide reads, in one-letter code: MSDLLFPVPESWAKSAWIDNDVYRRMYEQSISDPEGFWGEQAGRLDWFQPWMKVKEGSFDGDVRIRWFSGGKLNVSYNCLDRHLVGRGDQIALLWEGDDPAVSRSLTYRRLHEEVCRFANVMKSLGLRRGDRVTIYLPMIPELAVAMLACTRIGVVHSIVFAGFSPESLRERIRDCQGRVVITADEGLRGGKPLPLKENADEAVGKCPFVEKVIVVRRTGSQIPWTSGRDFDWEGLMQEASADCPPEEMDAEDPLFILYTSGSTGKPKGVLHTTGGYLLFTAMSHQHIFDYHDGDIYWCTADIGWVTGHSYTIYGPLANGATTVMFEGVPNYPDWSRFWRIVDKHGVTILYTAPTAIRALMRQGDEPVRKTFRKTLRLLGTVGEPINPEAWLWYYNVVGEKRCPIVDTWWQTETGGILITPFPGAMALKPGSAARPYFGVKPAIMDSEGRFLEGTGTGNLVITEPWPGMLRTIYGDHQRFLDTYFSTYKGVYFTGDGARRDEDGDYWITGRVDDVINVSGHRLGTAEVESALAAHSAVAEAAVVGFPHEIKGQGIYAYVTLKTDRQPSDALRKELVSWVRREIGAIAAPDFIQWAPGLPKTRSGKIMRRILRKIAADDIADLGDTTTLAEPAVVDDLLKGRLAAAWE.

CoA is bound by residues 189–192 (RGGK), Thr307, and Asn331. ATP is bound by residues 383–385 (GEP), 407–412 (DTWWQT), Asp496, and Arg511. Ser519 is a CoA binding site. Arg522 serves as a coordination point for ATP. Mg(2+) contacts are provided by His535 and Val538. Position 580 (Arg580) interacts with CoA. Lys605 carries the post-translational modification N6-acetyllysine.

Belongs to the ATP-dependent AMP-binding enzyme family. Mg(2+) is required as a cofactor. Acetylated. Deacetylation by the SIR2-homolog deacetylase activates the enzyme.

The catalysed reaction is acetate + ATP + CoA = acetyl-CoA + AMP + diphosphate. Its function is as follows. Catalyzes the conversion of acetate into acetyl-CoA (AcCoA), an essential intermediate at the junction of anabolic and catabolic pathways. AcsA undergoes a two-step reaction. In the first half reaction, AcsA combines acetate with ATP to form acetyl-adenylate (AcAMP) intermediate. In the second half reaction, it can then transfer the acetyl group from AcAMP to the sulfhydryl group of CoA, forming the product AcCoA. This Syntrophus aciditrophicus (strain SB) protein is Acetyl-coenzyme A synthetase.